Reading from the N-terminus, the 436-residue chain is Probable protein phosphatase 2C 15 (436 aa).

Residues 30 to 302 (KAAKMEKPIV…DDTTCIVVDI (273 aa)) form the PPM-type phosphatase domain. Mn(2+)-binding residues include Asp-78, Gly-79, Asp-254, and Asp-293.

It belongs to the PP2C family. It depends on Mg(2+) as a cofactor. Mn(2+) serves as cofactor.

It carries out the reaction O-phospho-L-seryl-[protein] + H2O = L-seryl-[protein] + phosphate. The enzyme catalyses O-phospho-L-threonyl-[protein] + H2O = L-threonyl-[protein] + phosphate. This chain is Probable protein phosphatase 2C 15, found in Arabidopsis thaliana (Mouse-ear cress).